The following is a 175-amino-acid chain: Ribosome maturation factor RimM (175 aa).

In terms of domain architecture, PRC barrel spans 103-175 (EGEYYWSDLI…LLTVDWDPDF (73 aa)).

Belongs to the RimM family. As to quaternary structure, binds ribosomal protein uS19.

Its subcellular location is the cytoplasm. Functionally, an accessory protein needed during the final step in the assembly of 30S ribosomal subunit, possibly for assembly of the head region. Essential for efficient processing of 16S rRNA. May be needed both before and after RbfA during the maturation of 16S rRNA. It has affinity for free ribosomal 30S subunits but not for 70S ribosomes. The protein is Ribosome maturation factor RimM of Nitrosococcus oceani (strain ATCC 19707 / BCRC 17464 / JCM 30415 / NCIMB 11848 / C-107).